Consider the following 458-residue polypeptide: Probable M18 family aminopeptidase 1 (458 aa).

The Zn(2+) site is built by His-95, His-170, and His-434.

Belongs to the peptidase M18 family. It depends on Zn(2+) as a cofactor.

The sequence is that of Probable M18 family aminopeptidase 1 (apeA) from Borreliella burgdorferi (strain ATCC 35210 / DSM 4680 / CIP 102532 / B31) (Borrelia burgdorferi).